A 379-amino-acid chain; its full sequence is Transcription termination factor Rho (379 aa).

The Rho RNA-BD domain occupies 1-68 (MTDKYGFLRS…KRIFQINGRF (68 aa)). ATP is bound by residues 111–116 (GKGQRG), 123–128 (KTGKTT), and Arg154.

It belongs to the Rho family. As to quaternary structure, homohexamer. The homohexamer assembles into an open ring structure.

Functionally, facilitates transcription termination by a mechanism that involves Rho binding to the nascent RNA, activation of Rho's RNA-dependent ATPase activity, and release of the mRNA from the DNA template. This Karelsulcia muelleri (strain SMDSEM) (Sulcia muelleri) protein is Transcription termination factor Rho.